The chain runs to 873 residues: DNA mismatch repair protein MutS (873 aa).

Residue 625-632 (GPNMGGKS) participates in ATP binding.

This sequence belongs to the DNA mismatch repair MutS family.

This protein is involved in the repair of mismatches in DNA. It is possible that it carries out the mismatch recognition step. This protein has a weak ATPase activity. The polypeptide is DNA mismatch repair protein MutS (Xanthomonas euvesicatoria pv. vesicatoria (strain 85-10) (Xanthomonas campestris pv. vesicatoria)).